We begin with the raw amino-acid sequence, 367 residues long: MDLDCQADIADLDTTLTTVERVLDVDGLRARIKTLEEAAADPNLWDDQARGQQVTSQLSHAQGELRRVEELRSRLDDLPVLYELAEESEDNSVVAEADAERVKLREDIEAMEVRTLLSGEYDEREAVVTIRSGAGGVDAADWAEMLMRMYIRWAEAHKYPVEVFDTSYAEEAGIKSATFAVHAPFAYGTLSVEQGTHRLVRISPFDNQSRRQTSFADVEVLPVVETTDHIDIPEGDLRVDVYRSSGPGGQSVNTTDSAVRLTHIPTGIVVTCQNEKSQLQNKVAAMRVLQARLLERKRQEERAEMDALKGDGGSSWGTQMRSYVLQPYQMVKDLRTEYEVGNPAAVLDGDIDGFIEAGIRWRNRRDD.

Q250 carries the N5-methylglutamine modification.

Belongs to the prokaryotic/mitochondrial release factor family. Methylated by PrmC. Methylation increases the termination efficiency of RF2.

It is found in the cytoplasm. Functionally, peptide chain release factor 2 directs the termination of translation in response to the peptide chain termination codons UGA and UAA. This chain is Peptide chain release factor 2, found in Mycobacteroides abscessus (strain ATCC 19977 / DSM 44196 / CCUG 20993 / CIP 104536 / JCM 13569 / NCTC 13031 / TMC 1543 / L948) (Mycobacterium abscessus).